The chain runs to 543 residues: CTP synthase (543 aa).

Positions 1–265 (MTKFIFVTGG…DRLVTDRFRI (265 aa)) are amidoligase domain. Residue Ser-13 coordinates CTP. Ser-13 is a binding site for UTP. Residues 14 to 19 (SLGKGI) and Asp-71 contribute to the ATP site. 2 residues coordinate Mg(2+): Asp-71 and Glu-139. CTP contacts are provided by residues 146–148 (DIE), 186–191 (KTKPTQ), and Lys-222. UTP is bound by residues 186-191 (KTKPTQ) and Lys-222. The region spanning 290–541 (EIAMVGKYVD…VEAASQHKQT (252 aa)) is the Glutamine amidotransferase type-1 domain. Gly-351 contacts L-glutamine. The active-site Nucleophile; for glutamine hydrolysis is the Cys-378. L-glutamine contacts are provided by residues 379-382 (LGMQ), Glu-402, and Arg-469. Catalysis depends on residues His-514 and Glu-516.

This sequence belongs to the CTP synthase family. In terms of assembly, homotetramer.

It carries out the reaction UTP + L-glutamine + ATP + H2O = CTP + L-glutamate + ADP + phosphate + 2 H(+). The enzyme catalyses L-glutamine + H2O = L-glutamate + NH4(+). It catalyses the reaction UTP + NH4(+) + ATP = CTP + ADP + phosphate + 2 H(+). It participates in pyrimidine metabolism; CTP biosynthesis via de novo pathway; CTP from UDP: step 2/2. Its activity is regulated as follows. Allosterically activated by GTP, when glutamine is the substrate; GTP has no effect on the reaction when ammonia is the substrate. The allosteric effector GTP functions by stabilizing the protein conformation that binds the tetrahedral intermediate(s) formed during glutamine hydrolysis. Inhibited by the product CTP, via allosteric rather than competitive inhibition. Catalyzes the ATP-dependent amination of UTP to CTP with either L-glutamine or ammonia as the source of nitrogen. Regulates intracellular CTP levels through interactions with the four ribonucleotide triphosphates. This is CTP synthase from Hydrogenovibrio crunogenus (strain DSM 25203 / XCL-2) (Thiomicrospira crunogena).